Consider the following 300-residue polypeptide: Protoheme IX farnesyltransferase (300 aa).

Helical transmembrane passes span 26 to 46 (VVQL…PGLP), 54 to 74 (IAWA…FNCI), 102 to 122 (LLFS…LVNP), 123 to 143 (LTMW…TLIL), 150 to 170 (NIVI…AAMT), 177 to 197 (ALIL…ALAL), 224 to 244 (VLLY…YGMS), 246 to 266 (WPYL…GFAL), and 279 to 299 (FRFS…DHYL).

Belongs to the UbiA prenyltransferase family. Protoheme IX farnesyltransferase subfamily.

The protein localises to the cell inner membrane. The enzyme catalyses heme b + (2E,6E)-farnesyl diphosphate + H2O = Fe(II)-heme o + diphosphate. It participates in porphyrin-containing compound metabolism; heme O biosynthesis; heme O from protoheme: step 1/1. Converts heme B (protoheme IX) to heme O by substitution of the vinyl group on carbon 2 of heme B porphyrin ring with a hydroxyethyl farnesyl side group. In Verminephrobacter eiseniae (strain EF01-2), this protein is Protoheme IX farnesyltransferase.